We begin with the raw amino-acid sequence, 151 residues long: Arginine repressor (151 aa).

This sequence belongs to the ArgR family.

It is found in the cytoplasm. Its pathway is amino-acid biosynthesis; L-arginine biosynthesis [regulation]. In terms of biological role, regulates arginine biosynthesis genes. The sequence is that of Arginine repressor from Clostridium novyi (strain NT).